A 495-amino-acid chain; its full sequence is Putative aldehyde dehydrogenase AldA (495 aa).

212-218 (GKGSESG) lines the NAD(+) pocket. Residues Glu-256 and Cys-290 contribute to the active site.

Belongs to the aldehyde dehydrogenase family.

The enzyme catalyses an aldehyde + NAD(+) + H2O = a carboxylate + NADH + 2 H(+). This chain is Putative aldehyde dehydrogenase AldA (aldA), found in Staphylococcus aureus (strain MSSA476).